The primary structure comprises 304 residues: DDRGK domain-containing protein 1 (304 aa).

The Lumenal portion of the chain corresponds to 1-2 (MD). A helical transmembrane segment spans residues 3 to 23 (LIILVGIAIALLVVIISLYLL). Residues 24 to 304 (QKKNSTTEAK…LTPVSAEGSS (281 aa)) lie on the Cytoplasmic side of the membrane. The interval 31–174 (EAKPAAAAPQ…AERLAKEERE (144 aa)) is disordered. A compositionally biased stretch (low complexity) spans 53-82 (RRAQIARNQRNRLRQNAPVAAAAPQAEAPA). Over residues 105-174 (LDEKMGAKKR…AERLAKEERE (70 aa)) the composition is skewed to basic and acidic residues.

The protein belongs to the DDRGK1 family. As to quaternary structure, interacts with Atg9; the interaction is transient.

The protein localises to the endoplasmic reticulum membrane. In terms of biological role, substrate adapter for ufmylation, the covalent attachment of the ubiquitin-like modifier UFM1 to substrate proteins. Required for ufmylation of Atg9; protects the nervous system during aging, possibly by stabilizing Atg9 and supporting its function. The sequence is that of DDRGK domain-containing protein 1 from Drosophila ananassae (Fruit fly).